The chain runs to 91 residues: UPF0386 protein CC_0226 (91 aa).

It belongs to the UPF0386 family.

The chain is UPF0386 protein CC_0226 from Caulobacter vibrioides (strain ATCC 19089 / CIP 103742 / CB 15) (Caulobacter crescentus).